Consider the following 273-residue polypeptide: Large ribosomal subunit protein uL2cz/uL2cy (273 aa).

Disordered stretches follow at residues 1 to 25 (MAIHLYKTSTSSTRNGAVDSQVKSN) and 224 to 273 (NPVD…RRRK).

Belongs to the universal ribosomal protein uL2 family. Part of the 50S ribosomal subunit.

It localises to the plastid. The protein resides in the chloroplast. The sequence is that of Large ribosomal subunit protein uL2cz/uL2cy (rpl2-A) from Phalaenopsis aphrodite subsp. formosana (Moth orchid).